A 222-amino-acid polypeptide reads, in one-letter code: Phosphatidylinositol phosphate synthase (222 aa).

31–34 (DIVT) is a binding site for a CDP-1,2-diacyl-sn-glycerol. 2 helical membrane passes run 32–49 (IVTL…LTLF) and 55–74 (WWGA…DGAM). 2 residues coordinate Mg(2+): Asp68 and Asp71. A CDP-1,2-diacyl-sn-glycerol is bound by residues Gly72, Arg76, and Thr82. Positions 89 and 93 each coordinate Mg(2+). Asp93 (proton acceptor) is an active-site residue. Helical transmembrane passes span 95–112 (LGDG…AFGL), 118–136 (VVAT…YIKA), 156–173 (LVIV…FFPL), and 179–196 (VAMW…LQRV).

Belongs to the CDP-alcohol phosphatidyltransferase class-I family. In terms of assembly, homodimer. The cofactor is Mg(2+).

It localises to the cell membrane. The protein localises to the secreted. It is found in the cell wall. The catalysed reaction is a CDP-1,2-diacyl-sn-glycerol + 1D-myo-inositol 3-phosphate = a 1,2-diacyl-sn-glycero-3-phospho-(1D-myo-inositol-3-phosphate) + CMP + H(+). It carries out the reaction 1,2-di-(9Z-octadecenoyl)-sn-glycero-3-cytidine-5'-diphosphate + 1D-myo-inositol 3-phosphate = 1,2-di-(9Z-octadecenoyl)-sn-glycero-3-phospho-(1D-myo-inositol-3-phosphate) + CMP + H(+). The enzyme catalyses 1,2-dihexadecanoyl-sn-glycero-3-CDP + 1D-myo-inositol 3-phosphate = 1,2-dihexadecanoyl-sn-glycero-3-phospho-(1D-myo-inositol-3-phosphate) + CMP + H(+). It participates in phospholipid metabolism; phosphatidylinositol phosphate biosynthesis. With respect to regulation, competitively inhibited by several inositol 1-phosphate analogs, including the phosphonate analog 1-deoxy-1-phosphonomethyl-myo-inositol (Ino-C-P). This leads to inhibition of M.smegmatis growth. Its function is as follows. Catalyzes the conjugation of the 1'-hydroxyl group of D-myo-inositol-3-phosphate (also named L-myo-inositol-1-phosphate) with a lipid tail of cytidine diphosphate diacylglycerol (CDP-DAG), forming phosphatidylinositol phosphate (PIP) and CMP. PIP is a precursor of phosphatidylinositol (PI) which is an essential lipid for mycobacteria required for formation of their cell wall. Is essential to the survival of M.smegmatis. This chain is Phosphatidylinositol phosphate synthase, found in Mycolicibacterium smegmatis (strain ATCC 700084 / mc(2)155) (Mycobacterium smegmatis).